The chain runs to 286 residues: Bifunctional protein FolD 2 (286 aa).

Residues 165-167 (GRG), Thr192, and Val233 contribute to the NADP(+) site.

This sequence belongs to the tetrahydrofolate dehydrogenase/cyclohydrolase family. In terms of assembly, homodimer.

The enzyme catalyses (6R)-5,10-methylene-5,6,7,8-tetrahydrofolate + NADP(+) = (6R)-5,10-methenyltetrahydrofolate + NADPH. The catalysed reaction is (6R)-5,10-methenyltetrahydrofolate + H2O = (6R)-10-formyltetrahydrofolate + H(+). It functions in the pathway one-carbon metabolism; tetrahydrofolate interconversion. In terms of biological role, catalyzes the oxidation of 5,10-methylenetetrahydrofolate to 5,10-methenyltetrahydrofolate and then the hydrolysis of 5,10-methenyltetrahydrofolate to 10-formyltetrahydrofolate. This is Bifunctional protein FolD 2 from Rhodococcus jostii (strain RHA1).